The chain runs to 268 residues: HLA class II histocompatibility antigen, DQ beta 2 chain (268 aa).

The first 32 residues, 1-32, serve as a signal peptide directing secretion; the sequence is MSWKMALQIPGGFWAAAVTVMLVMLSTPVAEA. Residues 33–126 form a beta-1 region; the sequence is RDFPKDFLVQ…ELRTTLQRQV (94 aa). The Extracellular segment spans residues 33 to 229; that stretch reads RDFPKDFLVQ…RAQSESAQSK (197 aa). 2 disulfide bridges follow: cysteine 47–cysteine 110 and cysteine 148–cysteine 204. An N-linked (GlcNAc...) asparagine glycan is attached at asparagine 51. Residues 127-229 form a beta-2 region; the sequence is EPTVTISPSR…RAQSESAQSK (103 aa). An Ig-like C1-type domain is found at 128–216; sequence PTVTISPSRT…EHPSLQSPIT (89 aa). Residues 230-250 form a helical membrane-spanning segment; the sequence is MLSGIGGFVLGLIFLGLGLII. Residues 251 to 268 are Cytoplasmic-facing; that stretch reads RHRGQKGPRGPPPAGLLH.

This sequence belongs to the MHC class II family. As to quaternary structure, heterodimer of an alpha and a beta subunit; also referred as MHC class II molecule. Dimer formation with HLA-DQA2, but not with HLA-DQA1, is required for efficient exit from the endoplasmic reticulum (ER). In the ER, forms a heterononamer; 3 MHC class II molecules bind to a CD74 homotrimer (also known as invariant chain or HLA class II histocompatibility antigen gamma chain). In the endosomal/lysosomal system; CD74 undergoes sequential degradation by various proteases; leaving a small fragment termed CLIP on each MHC class II molecule. MHC class II molecule interacts with HLA_DM, and HLA_DO in B-cells, in order to release CLIP and facilitate the binding of antigenic peptides. Association with HLA-DMA also occurs in skin Langerhans cells, in post-Golgi compartments. As to expression, restricted to skin Langerhans cells (at protein level).

Its subcellular location is the cell membrane. It is found in the endoplasmic reticulum membrane. It localises to the golgi apparatus. The protein resides in the trans-Golgi network membrane. The protein localises to the endosome membrane. Its subcellular location is the lysosome membrane. Binds peptides derived from antigens that access the endocytic route of antigen presenting cells (APC) and presents them on the cell surface for recognition by the CD4 T-cells. The peptide binding cleft accommodates peptides of 10-30 residues. The peptides presented by MHC class II molecules are generated mostly by degradation of proteins that access the endocytic route, where they are processed by lysosomal proteases and other hydrolases. Exogenous antigens that have been endocytosed by the APC are thus readily available for presentation via MHC II molecules, and for this reason this antigen presentation pathway is usually referred to as exogenous. As membrane proteins on their way to degradation in lysosomes as part of their normal turn-over are also contained in the endosomal/lysosomal compartments, exogenous antigens must compete with those derived from endogenous components. Autophagy is also a source of endogenous peptides, autophagosomes constitutively fuse with MHC class II loading compartments. In addition to APCs, other cells of the gastrointestinal tract, such as epithelial cells, express MHC class II molecules and CD74 and act as APCs, which is an unusual trait of the GI tract. To produce a MHC class II molecule that presents an antigen, three MHC class II molecules (heterodimers of an alpha and a beta chain) associate with a CD74 trimer in the ER to form a heterononamer. Soon after the entry of this complex into the endosomal/lysosomal system where antigen processing occurs, CD74 undergoes a sequential degradation by various proteases, including CTSS and CTSL, leaving a small fragment termed CLIP (class-II-associated invariant chain peptide). The removal of CLIP is facilitated by HLA-DM via direct binding to the alpha-beta-CLIP complex so that CLIP is released. HLA-DM stabilizes MHC class II molecules until primary high affinity antigenic peptides are bound. The MHC II molecule bound to a peptide is then transported to the cell membrane surface. In B-cells, the interaction between HLA-DM and MHC class II molecules is regulated by HLA-DO. Primary dendritic cells (DCs) also to express HLA-DO. Lysosomal microenvironment has been implicated in the regulation of antigen loading into MHC II molecules, increased acidification produces increased proteolysis and efficient peptide loading. The sequence is that of HLA class II histocompatibility antigen, DQ beta 2 chain (HLA-DQB2) from Homo sapiens (Human).